The sequence spans 100 residues: Large ribosomal subunit protein uL23 (100 aa).

Belongs to the universal ribosomal protein uL23 family. Part of the 50S ribosomal subunit. Contacts protein L29, and trigger factor when it is bound to the ribosome.

One of the early assembly proteins it binds 23S rRNA. One of the proteins that surrounds the polypeptide exit tunnel on the outside of the ribosome. Forms the main docking site for trigger factor binding to the ribosome. The sequence is that of Large ribosomal subunit protein uL23 from Novosphingobium aromaticivorans (strain ATCC 700278 / DSM 12444 / CCUG 56034 / CIP 105152 / NBRC 16084 / F199).